We begin with the raw amino-acid sequence, 156 residues long: CD-NTase/cGAS isopeptidase (156 aa).

The MPN domain occupies 9–147 (IDDFDNHVVI…WIGKKIKNDI (139 aa)). Glutamate 38 (proton donor/acceptor) is an active-site residue. Zn(2+) contacts are provided by histidine 100, histidine 102, and aspartate 113. The JAMM motif signature appears at 100–113 (HTHPEDFPHPSFID).

This sequence belongs to the peptidase M67B family. Cap3 isopeptidase subfamily.

In terms of biological role, metalloprotease priming reversal component of a CBASS antivirus system. CBASS (cyclic oligonucleotide-based antiphage signaling system) provides immunity against bacteriophages. The CD-NTase protein (DncV) synthesizes cyclic nucleotides in response to infection; these serve as specific second messenger signals. The signals activate a diverse range of effectors, leading to bacterial cell death and thus abortive phage infection. A type II-A(GA) CBASS system. Functionally, reverses the primed state of DncV, the CD-NTase, cleaving it from cellular proteins. Cleaves a Sumo-DncV-DncV fusion protein precisely between the 2 DncV moieties. Protects E.coli against phage infection. When capV and dncV are introduced in E.coli MG1655 there is 1000-fold protection against phage P1; protection against other phage (T4, T5 and T6) requires the 2 subsequent genes. In another paper the capV-dncV-cap2-cap3 operon gives 10(4)-10(5)-fold protection against phages lambda, T2, T4 and T6, about 1000-fold protection against P1 and 10-fold protection against T5. The chain is CD-NTase/cGAS isopeptidase from Escherichia coli (strain TW11681).